The chain runs to 558 residues: Phosphatase and actin regulator 3 (558 aa).

A compositionally biased stretch (polar residues) spans 1–11 (MAASEDGSSCL). Disordered stretches follow at residues 1–69 (MAAS…KLAT), 81–288 (KKKN…RPLP), and 300–366 (LATK…ENLM). Positions 18–33 (QSDPSFLSDSSATSTD) are enriched in low complexity. Phosphothreonine is present on Thr-69. Residues 92–117 (SALEKKMAGRQGREELIKQGLLEMME) form an RPEL 1 repeat. A compositionally biased stretch (basic and acidic residues) spans 94–108 (LEKKMAGRQGREELI). The segment covering 144 to 169 (ETLTSEGAQPGSPSASGTDQVSQDEL) has biased composition (polar residues). The span at 228–239 (PSPPLLPTPPPK) shows a compositional bias: pro residues. A Phosphoserine modification is found at Ser-229. Thr-235 is modified (phosphothreonine). Basic and acidic residues-rich tracts occupy residues 300 to 341 (LATK…RDEA) and 354 to 363 (ATKDSEENKE). RPEL repeat units lie at residues 400–425 (ELLAVKLRNRPSKQELEDRNIFPRRT), 438–463 (MKLSKRLSQRPAVEELERRNILKQRN), and 476–501 (QRLTRKLNQRPTVDELRDRKILIRFS). Residues 449–485 (AVEELERRNILKQRNDQTEQEERREIKQRLTRKLNQR) adopt a coiled-coil conformation.

This sequence belongs to the phosphatase and actin regulator family. As to quaternary structure, binds PPP1CA and actin; thus inhibiting the protein phosphatase 1 (PP1) activity.

Its subcellular location is the nucleus matrix. In Mus musculus (Mouse), this protein is Phosphatase and actin regulator 3 (Phactr3).